The chain runs to 272 residues: Regulatory factor X-associated protein (272 aa).

3 disordered regions span residues 1 to 20 (MEAQGVAEGAGPGAASGVPH), 74 to 142 (LCEG…KTCT), and 175 to 195 (KKKKSDQALNCGGTASTGSAG). Over residues 79–94 (GDGEEEAGEDEADLLD) the composition is skewed to acidic residues. The short motif at 163–178 (KKHRNKMYKDKYKKKK) is the Nuclear localization signal element. Lys198 is covalently cross-linked (Glycyl lysine isopeptide (Lys-Gly) (interchain with G-Cter in SUMO2)). Residues 214–270 (TGSFGDRPARPTLLEQVLNQKRLSLLRSPEVVQFLQKQQQLLNQQVLEQRQQQFPGT) are C-terminal domain.

In terms of assembly, the RFX heterotetrameric complex consists of 2 molecules of RFX5 and one each of RFXAP and RFX-B/RFXANK; with each subunit representing a separate complementation group. RFX forms cooperative DNA binding complexes with X2BP and CBF/NF-Y. RFX associates with CIITA to form an active transcriptional complex. In terms of processing, phosphorylated. Ubiquitous.

The protein resides in the nucleus. Functionally, part of the RFX complex that binds to the X-box of MHC II promoters. The chain is Regulatory factor X-associated protein (RFXAP) from Homo sapiens (Human).